Here is a 2184-residue protein sequence, read N- to C-terminus: Genome polyprotein (2184 aa).

Gly2 carries the N-myristoyl glycine; by host lipid modification. Topologically, residues 2–1494 are cytoplasmic; sequence GAQVSTQKTG…HVSRAFICLQ (1493 aa). The segment at 567 to 583 is amphipathic alpha-helix; sequence FYQGDVQNAVEGAMVRV. Catalysis depends on for protease 2A activity residues His871 and Asp889. The Zn(2+) site is built by Cys906 and Cys908. Cys960 (for protease 2A activity) is an active-site residue. Cys966 and His968 together coordinate Zn(2+). The tract at residues 1100–1172 is membrane-binding; it reads NNGWLKKFTE…EQSAPSQGDQ (73 aa). An oligomerization region spans residues 1100 to 1238; sequence NNGWLKKFTE…SPGAGKSVAT (139 aa). The RNA-binding stretch occupies residues 1121–1125; the sequence is AIKIQ. Residues 1204 to 1360 form the SF3 helicase domain; it reads EKKMSNYIQF…SMYSQNGKIN (157 aa). Cys1368, Cys1380, and Cys1385 together coordinate Zn(2+). The C4-type; degenerate zinc finger occupies 1368–1385; sequence CDEDCCPVNFKKCCPLVC. Residues 1412 to 1419 form an RNA-binding region; that stretch reads EYNHRHSV. Residues 1423–1428 are oligomerization; the sequence is LEALFQ. The stretch at 1495–1510 is an intramembrane region; sequence ALTTFVSVAGIIYIIY. Over 1511 to 2184 the chain is Cytoplasmic; it reads KLFAGFQGAY…TLRRKWLDSF (674 aa). At Tyr1520 the chain carries O-(5'-phospho-RNA)-tyrosine. The 179-residue stretch at 1540 to 1718 folds into the Peptidase C3 domain; sequence GPAFEFAVAM…FSAALLRHYF (179 aa). Active-site for protease 3C activity residues include His1579, Glu1610, and Cys1686. Positions 1949–2065 constitute a RdRp catalytic domain; sequence GHLIAFDYSG…SYPWPIDASL (117 aa). Mg(2+)-binding residues include Asp1955 and Asp2051.

This sequence belongs to the picornaviruses polyprotein family. As to quaternary structure, interacts with capsid protein VP1 and capsid protein VP3 to form heterotrimeric protomers. Interacts with capsid protein VP0, and capsid protein VP3 to form heterotrimeric protomers. Five protomers subsequently associate to form pentamers which serve as building blocks for the capsid. Interacts with capsid protein VP2, capsid protein VP3 and capsid protein VP4 following cleavage of capsid protein VP0. In terms of assembly, interacts with capsid protein VP1 and capsid protein VP3 in the mature capsid. As to quaternary structure, interacts with capsid protein VP0 and capsid protein VP1 to form heterotrimeric protomers. Five protomers subsequently associate to form pentamers which serve as building blocks for the capsid. Interacts with capsid protein VP4 in the mature capsid. Interacts with protein 2C; this interaction may be important for virion morphogenesis. Interacts with capsid protein VP1 and capsid protein VP3. In terms of assembly, homodimer. As to quaternary structure, homohexamer; forms a hexameric ring structure with 6-fold symmetry characteristic of AAA+ ATPases. Interacts (via N-terminus) with host RTN3 (via reticulon domain); this interaction is important for viral replication. Interacts with capsid protein VP3; this interaction may be important for virion morphogenesis. Interacts with protein 3CD. In terms of assembly, homodimer. Interacts with host GBF1. Interacts (via GOLD domain) with host ACBD3 (via GOLD domain); this interaction allows the formation of a viral protein 3A/ACBD3 heterotetramer with a 2:2 stoichiometry, which will stimulate the recruitment of host PI4KB in order to synthesize PI4P at the viral RNA replication sites. As to quaternary structure, interacts with RNA-directed RNA polymerase. Interacts with protein 3AB and with RNA-directed RNA polymerase. In terms of assembly, interacts with Viral protein genome-linked and with protein 3CD. Mg(2+) is required as a cofactor. Specific enzymatic cleavages in vivo by the viral proteases yield processing intermediates and the mature proteins. In terms of processing, myristoylation is required for the formation of pentamers during virus assembly. Further assembly of 12 pentamers and a molecule of genomic RNA generates the provirion. Post-translationally, during virion maturation, immature virions are rendered infectious following cleavage of VP0 into VP4 and VP2. This maturation seems to be an autocatalytic event triggered by the presence of RNA in the capsid and it is followed by a conformational change infectious virion. Myristoylation is required during RNA encapsidation and formation of the mature virus particle. In terms of processing, VPg is uridylylated by the polymerase into VPg-pUpU. This acts as a nucleotide-peptide primer for the genomic RNA replication.

It localises to the virion. It is found in the host cytoplasm. The protein resides in the host cytoplasmic vesicle membrane. The protein localises to the host nucleus. It catalyses the reaction a ribonucleoside 5'-triphosphate + H2O = a ribonucleoside 5'-diphosphate + phosphate + H(+). The enzyme catalyses Selective cleavage of Tyr-|-Gly bond in the picornavirus polyprotein.. The catalysed reaction is RNA(n) + a ribonucleoside 5'-triphosphate = RNA(n+1) + diphosphate. It carries out the reaction Selective cleavage of Gln-|-Gly bond in the poliovirus polyprotein. In other picornavirus reactions Glu may be substituted for Gln, and Ser or Thr for Gly.. Its activity is regulated as follows. Replication or transcription is subject to high level of random mutations by the nucleotide analog ribavirin. Its function is as follows. Forms an icosahedral capsid of pseudo T=3 symmetry with capsid proteins VP2 and VP3. The capsid is 300 Angstroms in diameter, composed of 60 copies of each capsid protein and enclosing the viral positive strand RNA genome. Capsid protein VP1 mainly forms the vertices of the capsid. Capsid protein VP1 interacts with host ITGA2/ITGB1 to provide virion attachment to target host cells. This attachment induces virion internalization predominantly through caveolin-mediated endocytosis. Tyrosine kinases are probably involved in the entry process. After binding to its receptor, the capsid undergoes conformational changes. Capsid protein VP1 N-terminus (that contains an amphipathic alpha-helix) and capsid protein VP4 are externalized. Together, they shape a pore in the host membrane through which viral genome is translocated to host cell cytoplasm. Functionally, forms an icosahedral capsid of pseudo T=3 symmetry with capsid proteins VP2 and VP3. The capsid is 300 Angstroms in diameter, composed of 60 copies of each capsid protein and enclosing the viral positive strand RNA genome. In terms of biological role, lies on the inner surface of the capsid shell. After binding to the host receptor, the capsid undergoes conformational changes. Capsid protein VP4 is released, Capsid protein VP1 N-terminus is externalized, and together, they shape a pore in the host membrane through which the viral genome is translocated into the host cell cytoplasm. Component of immature procapsids, which is cleaved into capsid proteins VP4 and VP2 after maturation. Allows the capsid to remain inactive before the maturation step. Its function is as follows. Cysteine protease that cleaves viral polyprotein and specific host proteins. It is responsible for the autocatalytic cleavage between the P1 and P2 regions, which is the first cleavage occurring in the polyprotein. Also cleaves the host translation initiation factor EIF4G1, in order to shut down the capped cellular mRNA translation. Inhibits the host nucleus-cytoplasm protein and RNA trafficking by cleaving host members of the nuclear pores. Counteracts stress granule formation probably by antagonizing its assembly or promoting its dissassembly. Functionally, plays an essential role in the virus replication cycle by acting as a viroporin. Creates a pore in the host endoplasmic reticulum and as a consequence releases Ca2+ in the cytoplasm of infected cell. In turn, high levels of cytoplasmic calcium may trigger membrane trafficking and transport of viral ER-associated proteins to viroplasms, sites of viral genome replication. In terms of biological role, induces and associates with structural rearrangements of intracellular membranes. Displays RNA-binding, nucleotide binding and NTPase activities. May play a role in virion morphogenesis and viral RNA encapsidation by interacting with the capsid protein VP3. Localizes the viral replication complex to the surface of membranous vesicles. Together with protein 3CD binds the Cis-Active RNA Element (CRE) which is involved in RNA synthesis initiation. Acts as a cofactor to stimulate the activity of 3D polymerase, maybe through a nucleid acid chaperone activity. Its function is as follows. Localizes the viral replication complex to the surface of membranous vesicles. It inhibits host cell endoplasmic reticulum-to-Golgi apparatus transport and causes the disassembly of the Golgi complex, possibly through GBF1 interaction. This would result in depletion of MHC, trail receptors and IFN receptors at the host cell surface. Plays an essential role in viral RNA replication by recruiting ACBD3 and PI4KB at the viral replication sites, thereby allowing the formation of the rearranged membranous structures where viral replication takes place. Functionally, acts as a primer for viral RNA replication and remains covalently bound to viral genomic RNA. VPg is uridylylated prior to priming replication into VPg-pUpU. The oriI viral genomic sequence may act as a template for this. The VPg-pUpU is then used as primer on the genomic RNA poly(A) by the RNA-dependent RNA polymerase to replicate the viral genome. During genome replication, the VPg-RNA linkage is removed by the host TDP2, thereby accelerating replication. During the late stage of the replication cycle, host TDP2 is excluded from sites of viral RNA synthesis and encapsidation, allowing for the generation of progeny virions. In terms of biological role, involved in the viral replication complex and viral polypeptide maturation. It exhibits protease activity with a specificity and catalytic efficiency that is different from protease 3C. Protein 3CD lacks polymerase activity. Protein 3CD binds to the 5'UTR of the viral genome. Replicates the viral genomic RNA on the surface of intracellular membranes. May form linear arrays of subunits that propagate along a strong head-to-tail interaction called interface-I. Covalently attaches UMP to a tyrosine of VPg, which is used to prime RNA synthesis. The positive stranded RNA genome is first replicated at virus induced membranous vesicles, creating a dsRNA genomic replication form. This dsRNA is then used as template to synthesize positive stranded RNA genomes. ss(+)RNA genomes are either translated, replicated or encapsidated. Its function is as follows. Major viral protease that mediates proteolytic processing of the polyprotein. Cleaves host EIF5B, contributing to host translation shutoff. Also cleaves host PABPC1, contributing to host translation shutoff. Cleaves host NLRP1, triggers host N-glycine-mediated degradation of the autoinhibitory NLRP1 N-terminal fragment. The polypeptide is Genome polyprotein (Homo sapiens (Human)).